A 253-amino-acid chain; its full sequence is Tropomyosin-1 (253 aa).

Residues 7-253 (VNKLVRLQGK…MDDVGDDDTQ (247 aa)) adopt a coiled-coil conformation.

This sequence belongs to the tropomyosin family. As to quaternary structure, homodimer.

In terms of biological role, tropomyosin, in association with the troponin complex, plays a central role in the calcium dependent regulation of muscle contraction. This chain is Tropomyosin-1 (TROP1), found in Hydra vulgaris (Hydra).